A 399-amino-acid polypeptide reads, in one-letter code: Formate-dependent phosphoribosylglycinamide formyltransferase (399 aa).

Residues 22-23 and glutamate 82 contribute to the N(1)-(5-phospho-beta-D-ribosyl)glycinamide site; that span reads EL. ATP is bound by residues arginine 115, lysine 157, 162-167, 197-200, and glutamate 205; these read SSGKGQ and EAVV. The region spanning 120–315 is the ATP-grasp domain; that stretch reads RLAAEELGLQ…EFELHARAIL (196 aa). Positions 274 and 286 each coordinate Mg(2+). N(1)-(5-phospho-beta-D-ribosyl)glycinamide is bound by residues aspartate 293, lysine 362, and 369–370; that span reads RR.

This sequence belongs to the PurK/PurT family. In terms of assembly, homodimer.

The catalysed reaction is N(1)-(5-phospho-beta-D-ribosyl)glycinamide + formate + ATP = N(2)-formyl-N(1)-(5-phospho-beta-D-ribosyl)glycinamide + ADP + phosphate + H(+). It functions in the pathway purine metabolism; IMP biosynthesis via de novo pathway; N(2)-formyl-N(1)-(5-phospho-D-ribosyl)glycinamide from N(1)-(5-phospho-D-ribosyl)glycinamide (formate route): step 1/1. Its function is as follows. Involved in the de novo purine biosynthesis. Catalyzes the transfer of formate to 5-phospho-ribosyl-glycinamide (GAR), producing 5-phospho-ribosyl-N-formylglycinamide (FGAR). Formate is provided by PurU via hydrolysis of 10-formyl-tetrahydrofolate. The polypeptide is Formate-dependent phosphoribosylglycinamide formyltransferase (Thioalkalivibrio sulfidiphilus (strain HL-EbGR7)).